The following is a 270-amino-acid chain: UPF0246 protein PsycPRwf_0637 (270 aa).

The protein belongs to the UPF0246 family.

This Psychrobacter sp. (strain PRwf-1) protein is UPF0246 protein PsycPRwf_0637.